The following is an 874-amino-acid chain: Alanine--tRNA ligase (874 aa).

Residues His-563, His-567, Cys-665, and His-669 each contribute to the Zn(2+) site.

Belongs to the class-II aminoacyl-tRNA synthetase family. Zn(2+) is required as a cofactor.

It is found in the cytoplasm. The catalysed reaction is tRNA(Ala) + L-alanine + ATP = L-alanyl-tRNA(Ala) + AMP + diphosphate. Its function is as follows. Catalyzes the attachment of alanine to tRNA(Ala) in a two-step reaction: alanine is first activated by ATP to form Ala-AMP and then transferred to the acceptor end of tRNA(Ala). Also edits incorrectly charged Ser-tRNA(Ala) and Gly-tRNA(Ala) via its editing domain. This chain is Alanine--tRNA ligase, found in Aeromonas salmonicida (strain A449).